The sequence spans 164 residues: NADH-quinone oxidoreductase subunit I (164 aa).

4Fe-4S ferredoxin-type domains follow at residues 54-84 (LRRY…IEAG) and 95-124 (VRYD…EGPN). The [4Fe-4S] cluster site is built by Cys-64, Cys-67, Cys-70, Cys-74, Cys-104, Cys-107, Cys-110, and Cys-114.

The protein belongs to the complex I 23 kDa subunit family. As to quaternary structure, NDH-1 is composed of 14 different subunits. Subunits NuoA, H, J, K, L, M, N constitute the membrane sector of the complex. It depends on [4Fe-4S] cluster as a cofactor.

It is found in the cell inner membrane. It catalyses the reaction a quinone + NADH + 5 H(+)(in) = a quinol + NAD(+) + 4 H(+)(out). Functionally, NDH-1 shuttles electrons from NADH, via FMN and iron-sulfur (Fe-S) centers, to quinones in the respiratory chain. The immediate electron acceptor for the enzyme in this species is believed to be ubiquinone. Couples the redox reaction to proton translocation (for every two electrons transferred, four hydrogen ions are translocated across the cytoplasmic membrane), and thus conserves the redox energy in a proton gradient. The polypeptide is NADH-quinone oxidoreductase subunit I (Mesorhizobium japonicum (strain LMG 29417 / CECT 9101 / MAFF 303099) (Mesorhizobium loti (strain MAFF 303099))).